The primary structure comprises 121 residues: Large ribosomal subunit protein uL14 (121 aa).

The protein belongs to the universal ribosomal protein uL14 family. Part of the 50S ribosomal subunit. Forms a cluster with proteins L3 and L19. In the 70S ribosome, L14 and L19 interact and together make contacts with the 16S rRNA in bridges B5 and B8.

Binds to 23S rRNA. Forms part of two intersubunit bridges in the 70S ribosome. The sequence is that of Large ribosomal subunit protein uL14 from Azobacteroides pseudotrichonymphae genomovar. CFP2.